A 457-amino-acid chain; its full sequence is Bifunctional protein GlmU (457 aa).

The interval 1–230 (MSKRYAVVLA…FEESLGVNDR (230 aa)) is pyrophosphorylase. UDP-N-acetyl-alpha-D-glucosamine is bound by residues 9–12 (LAAG), K23, Q73, and 78–79 (GT). Position 103 (D103) interacts with Mg(2+). The UDP-N-acetyl-alpha-D-glucosamine site is built by G140, E155, N170, and N228. Residue N228 participates in Mg(2+) binding. The tract at residues 231–251 (IALAEASKLMQRRINDNHMRN) is linker. The segment at 252 to 457 (GVTLVNPENT…DYAKRLNHGK (206 aa)) is N-acetyltransferase. Residues R333 and K351 each coordinate UDP-N-acetyl-alpha-D-glucosamine. H363 functions as the Proton acceptor in the catalytic mechanism. UDP-N-acetyl-alpha-D-glucosamine contacts are provided by Y366 and N377. Residues 386-387 (NY), A423, and R440 each bind acetyl-CoA.

The protein in the N-terminal section; belongs to the N-acetylglucosamine-1-phosphate uridyltransferase family. It in the C-terminal section; belongs to the transferase hexapeptide repeat family. In terms of assembly, homotrimer. Requires Mg(2+) as cofactor.

It is found in the cytoplasm. It catalyses the reaction alpha-D-glucosamine 1-phosphate + acetyl-CoA = N-acetyl-alpha-D-glucosamine 1-phosphate + CoA + H(+). The catalysed reaction is N-acetyl-alpha-D-glucosamine 1-phosphate + UTP + H(+) = UDP-N-acetyl-alpha-D-glucosamine + diphosphate. Its pathway is nucleotide-sugar biosynthesis; UDP-N-acetyl-alpha-D-glucosamine biosynthesis; N-acetyl-alpha-D-glucosamine 1-phosphate from alpha-D-glucosamine 6-phosphate (route II): step 2/2. It functions in the pathway nucleotide-sugar biosynthesis; UDP-N-acetyl-alpha-D-glucosamine biosynthesis; UDP-N-acetyl-alpha-D-glucosamine from N-acetyl-alpha-D-glucosamine 1-phosphate: step 1/1. It participates in bacterial outer membrane biogenesis; LPS lipid A biosynthesis. Functionally, catalyzes the last two sequential reactions in the de novo biosynthetic pathway for UDP-N-acetylglucosamine (UDP-GlcNAc). The C-terminal domain catalyzes the transfer of acetyl group from acetyl coenzyme A to glucosamine-1-phosphate (GlcN-1-P) to produce N-acetylglucosamine-1-phosphate (GlcNAc-1-P), which is converted into UDP-GlcNAc by the transfer of uridine 5-monophosphate (from uridine 5-triphosphate), a reaction catalyzed by the N-terminal domain. The polypeptide is Bifunctional protein GlmU (Listeria welshimeri serovar 6b (strain ATCC 35897 / DSM 20650 / CCUG 15529 / CIP 8149 / NCTC 11857 / SLCC 5334 / V8)).